We begin with the raw amino-acid sequence, 1613 residues long: MLPLIGKTIIFDNFPDPSDTWEIIETIGKGTYGKVFKVLNKKSGQKAAVKILDPIHDIDEEIEAEYNILRTLSDHPNVVRFYGIYFKKDKINGDKLWLVLELCNGGSVTDLVKGFLKRGERMSEPVIAYILHEALMGLQHLHSNKTIHRDVKGNNILLTTEGGVKLVDFGVSAQLSSTRHRLNTSVGTPFWMAPEVIACEQQLDTTYDARCDTWSLGITAIELGDGDPPLAELHPMRALFKIPRNPPPKLRQPELWSAEFNDFISKCLTKDYEKRPTVSDLLKHKFITQIEGKDVILQKQLMEFIDIHQCLGSTEKARHERIHTKKGNLNRSLISSLKDVDDLATLDVLDEPTASPHLHPCHSRDQIHIHVADILIALNPFQSLGIYSPKLSRLYIGAKRTANPPHIFAMADLGYQSMVTYNADQCIVISGESGAGKTESAHLLVQQLTVLGKANNRTLQEKILQMNNLVEAFGNACTIINDNSSRFGKYLEMKFTSSGAVVGAQISEYLLEKSRVIHQAMGEKNFHIFYYIYGGLAEKKKLALYKSPEHKPPRYLQNDNLRTVQDMMNNSFYKSQYELIEQCFKVIGFTMEQLASVYSVLAAILNVGNIEFSSVATEYQMDKSYICNHTALENCASLLCIQADELQEALTSHCVVTRGETIIRPNTVEKAADVRDAMAKTLYGRLFSCIVNCINSLLKHDTSPSGDEELNIGILDIFGFENFKRNSFEQLCINIANEQIQYYFNQHVFAWEQNEYLNEDVDARVIEYEDNRPLLDMFLQKPMGLLSLLDEESRFPKATDQTLIEKFEDNLKSQYFWRPKRMELSFGIHHYAGKVLYSASGFLAKNRDTFPTDIVLPLRSSENSVIRQLVNHPLTKTGNLPLSKTKNIVNYQMWNSEKSTNLTKGETRDVTCHACETTNVKTQTVSSYFRYSLMDLLSKMVVGQPHFVRCIKPNNERQARKYDKEKVLLQLRCTGILETARIRRLGYSHRILFANFIKRYYILCYKSSEEPPVSPDTCAAILEKAGLDNWALGKTKVFLKYYHVEQLNLMRKEATNKLVLIQASVRAFLGARRYQELQQKRKSSAVIIQSAARGHLVRKQRKEIVDMKNTAVTTIQTSDQEFDYKKNFENTRESFVKKQTENAVPTNESNTSTPNNKESPSAGKTAPFIAESKATNVESNNRRYHTQKKMSNVYAEGQNQELYIVEDTWAEVSPRQKYVQDLEESRKMRKEEKGDAVIQSYCQWYTEGSNFEESKATCLEGRETWERTSCPGLWLTEEIYLRKTLDPTLSQKSVYQNADGKEKEHKVSVVTQNAPLGNLERDYHLLGFLGEEDTGPVPQAQEEHKAVSIHSKYQSSKKKQQLGKDRLAPPFKNQKILSSSTEVAKTTHNVYPCPTKQEGVHHSKMVDERDSKMASKKEAWDLAMFSRQISKLSEEYFILQKNLNEIILAQQLKPFYLGIYRHKPINRHVSTHQYLSGVSKGEEPKILRPPRRPRKPKTLNNPEDSTYYYLLHKSTQEEKRRPGKDSQGKLLGLEDFYYKEFLPTHYGPKAHSSNAREWKALKEPQAQPIESNERCWTTSENESLEEERISANPYDYRRLLRKTSQRQRLVQQL.

The 267-residue stretch at 21–287 (WEIIETIGKG…VSDLLKHKFI (267 aa)) folds into the Protein kinase domain. Residues 27–35 (IGKGTYGKV) and Lys50 each bind ATP. The active-site Proton acceptor is Asp150. The Myosin motor domain maps to 338–1052 (KDVDDLATLD…HVEQLNLMRK (715 aa)). Residues 933 to 955 (LMDLLSKMVVGQPHFVRCIKPNN) are actin-binding. 2 IQ domains span residues 1054 to 1083 (ATNK…KRKS) and 1081 to 1110 (RKSS…MKNT). Disordered regions lie at residues 1136 to 1168 (VKKQ…TAPF) and 1476 to 1506 (SGVS…EDST). Over residues 1145–1161 (PTNESNTSTPNNKESPS) the composition is skewed to low complexity. Residues 1398–1476 (EGVHHSKMVD…RHVSTHQYLS (79 aa)) form an interaction with MORN4 region. Residues 1488 to 1497 (RPPRRPRKPK) show a composition bias toward basic residues.

The protein in the C-terminal section; belongs to the TRAFAC class myosin-kinesin ATPase superfamily. Myosin family. It in the N-terminal section; belongs to the protein kinase superfamily. STE Ser/Thr protein kinase family. Interacts with MORN4. Interacts (via C-terminus) with ESPN and ESPNL. In terms of tissue distribution, expressed in the cochlear hair cells (at protein level). Expressed in utricle hair bundles (at protein level).

Its subcellular location is the cytoplasm. The protein resides in the cytoskeleton. The protein localises to the cell projection. It is found in the filopodium tip. It localises to the stereocilium. The enzyme catalyses L-seryl-[protein] + ATP = O-phospho-L-seryl-[protein] + ADP + H(+). It catalyses the reaction L-threonyl-[protein] + ATP = O-phospho-L-threonyl-[protein] + ADP + H(+). It carries out the reaction ATP + H2O = ADP + phosphate + H(+). Actin-dependent motor protein with a protein kinase activity, playing an essential role in hearing. Probably plays also a role in vision. Required for normal cochlear hair bundle development and hearing. Plays an important role in the early steps of cochlear hair bundle morphogenesis. Influences the number and lengths of stereocilia to be produced and limits the growth of microvilli within the forming auditory hair bundles thereby contributing to the architecture of the hair bundle, including its staircase pattern. Involved in the elongation of actin in stereocilia tips by transporting the actin regulatory factor ESPN to the plus ends of actin filaments. The sequence is that of Myosin-IIIa (Myo3a) from Mus musculus (Mouse).